The primary structure comprises 263 residues: Putative ankyrin repeat domain-containing protein 20A12 pseudogene (263 aa).

Coiled-coil stretches lie at residues 65–121 and 171–263; these read KKDL…MLES and NQVF…IQLH.

The polypeptide is Putative ankyrin repeat domain-containing protein 20A12 pseudogene (Homo sapiens (Human)).